Here is a 99-residue protein sequence, read N- to C-terminus: Large ribosomal subunit protein uL23 (99 aa).

It belongs to the universal ribosomal protein uL23 family. In terms of assembly, part of the 50S ribosomal subunit. Contacts protein L29, and trigger factor when it is bound to the ribosome.

Its function is as follows. One of the early assembly proteins it binds 23S rRNA. One of the proteins that surrounds the polypeptide exit tunnel on the outside of the ribosome. Forms the main docking site for trigger factor binding to the ribosome. This Psychromonas ingrahamii (strain DSM 17664 / CCUG 51855 / 37) protein is Large ribosomal subunit protein uL23.